The following is a 373-amino-acid chain: Putative F-box protein At1g76830 (373 aa).

The F-box domain occupies I4 to L49.

This is Putative F-box protein At1g76830 from Arabidopsis thaliana (Mouse-ear cress).